The sequence spans 655 residues: Threonine--tRNA ligase (655 aa).

One can recognise a TGS domain in the interval Met-1–Thr-66. Residues Asp-248–Pro-540 are catalytic. Residues Cys-340, His-391, and His-517 each contribute to the Zn(2+) site.

Belongs to the class-II aminoacyl-tRNA synthetase family. In terms of assembly, homodimer. The cofactor is Zn(2+).

It is found in the cytoplasm. The catalysed reaction is tRNA(Thr) + L-threonine + ATP = L-threonyl-tRNA(Thr) + AMP + diphosphate + H(+). Catalyzes the attachment of threonine to tRNA(Thr) in a two-step reaction: L-threonine is first activated by ATP to form Thr-AMP and then transferred to the acceptor end of tRNA(Thr). Also edits incorrectly charged L-seryl-tRNA(Thr). The protein is Threonine--tRNA ligase of Caulobacter vibrioides (strain ATCC 19089 / CIP 103742 / CB 15) (Caulobacter crescentus).